The following is a 117-amino-acid chain: MKALFLVTRRVVSVMLTSCESKLPTWLVSHVGVRKIIVDGLSVLLLTILLLMCIIVVAVVTLKSVVNVLKRGIEKSGNRLNEFELKDRLLRLKSPEIRNPLRRNSKREKSLGHQKDF.

The protein is 16 kDa protein of Tobacco rattle virus (strain PLB).